Consider the following 178-residue polypeptide: Large ribosomal subunit protein uL6 (178 aa).

Belongs to the universal ribosomal protein uL6 family. As to quaternary structure, part of the 50S ribosomal subunit.

In terms of biological role, this protein binds to the 23S rRNA, and is important in its secondary structure. It is located near the subunit interface in the base of the L7/L12 stalk, and near the tRNA binding site of the peptidyltransferase center. The sequence is that of Large ribosomal subunit protein uL6 from Limosilactobacillus reuteri (strain DSM 20016) (Lactobacillus reuteri).